We begin with the raw amino-acid sequence, 97 residues long: Plasmid stability protein StbC (97 aa).

Involved in plasmid stability. This Pseudomonas syringae pv. tomato (strain ATCC BAA-871 / DC3000) protein is Plasmid stability protein StbC (stbC).